A 178-amino-acid polypeptide reads, in one-letter code: Thymidine kinase (178 aa).

13 to 20 contributes to the ATP binding site; that stretch reads GPMFAGKS. Glu-85 acts as the Proton acceptor in catalysis. Phe-115 contacts substrate. Zn(2+)-binding residues include Cys-140 and Cys-143. 159–163 lines the substrate pocket; it reads IEIIG. Zn(2+) contacts are provided by Cys-172 and Cys-175.

The protein belongs to the thymidine kinase family.

The enzyme catalyses thymidine + ATP = dTMP + ADP + H(+). This chain is Thymidine kinase (TK), found in Myxoma virus (strain Lausanne) (MYXV).